Reading from the N-terminus, the 216-residue chain is MKINTVLFDLDGTLINTNELIISSFLHTLHTYYPNQYKREDVLPFIGPSLHDTFSKIDESKVEELITSYRQFNHDHHDELVEEYETVYETVQELKKQGYKVGIVTTKARQTVEMGLKLSKLDEFFDVVVTIDDVEHVKPHPEPLQKALQLLDAKPEEALMVGDNHHDIVGGQNAGTKTAAVSWTLKGRAYLEAYKPDFMLDKMSDLLPILSDMNRS.

The active-site Nucleophile is the Asp9.

Belongs to the HAD-like hydrolase superfamily. PpaX family. The cofactor is Mg(2+).

The catalysed reaction is diphosphate + H2O = 2 phosphate + H(+). Its function is as follows. Hydrolyzes pyrophosphate formed during P-Ser-HPr dephosphorylation by HPrK/P. Might play a role in controlling the intracellular pyrophosphate pool. This is Pyrophosphatase PpaX from Bacillus thuringiensis (strain Al Hakam).